A 756-amino-acid chain; its full sequence is Polyribonucleotide nucleotidyltransferase (756 aa).

Aspartate 532 and aspartate 538 together coordinate Mg(2+). In terms of domain architecture, KH spans 598-657; the sequence is PRVTAIKVPVDKIGEVIGPKGKMINSITEQTGANISIEDDGTVFVGATDGPSAQAAIDMI. Positions 669–738 constitute an S1 motif domain; that stretch reads GERFLGTVVK…ARGKISLIPV (70 aa).

The protein belongs to the polyribonucleotide nucleotidyltransferase family. The cofactor is Mg(2+).

It localises to the cytoplasm. The enzyme catalyses RNA(n+1) + phosphate = RNA(n) + a ribonucleoside 5'-diphosphate. Involved in mRNA degradation. Catalyzes the phosphorolysis of single-stranded polyribonucleotides processively in the 3'- to 5'-direction. The polypeptide is Polyribonucleotide nucleotidyltransferase (Rhodococcus erythropolis (strain PR4 / NBRC 100887)).